Consider the following 433-residue polypeptide: Sulfhydrylase FUB7 (433 aa).

An N6-(pyridoxal phosphate)lysine modification is found at lysine 211.

Belongs to the trans-sulfuration enzymes family. The cofactor is pyridoxal 5'-phosphate.

It functions in the pathway mycotoxin biosynthesis. Functionally, sulfhydrylase; part of the gene cluster that mediates the biosynthesis of fusaric acid, a mycotoxin with low to moderate toxicity to animals and humans, but with high phytotoxic properties. L-aspartate is suggested as fusaric acid amino acid precursor that is activated and further processed to O-acetyl-L-homoserine by cluster enzymes aspartate kinase FUB3 and homoserine O-acetyltransferase FUB5, as well as enzymes of the primary metabolism. The polyketide synthase (PKS) FUB1 generates the triketide trans-2-hexenal which is presumptively released by the hydrolase FUB4 and linked to the NRPS-bound amino acid precursor by NAD(P)-dependent dehydrogenase FUB6. FUB1, FUB4, and the non-canonical NRPS Fub8 may form an enzyme complex. Further processing of the NRPS-bound intermediate might be carried out by FUB6 and the O-acetylhomoserine FUB7, enabling a spontaneous electrocyclization to close the carbon backbone of fusaric acid. Dihydrofusaric acid is likely to be released via reduction by the thioester reductase (TR) domain of FUB8 whereupon the final oxidation to fusaric acid may (also) be performed by the FMN-dependent dehydrogenase FUB9. The protein is Sulfhydrylase FUB7 of Gibberella moniliformis (strain M3125 / FGSC 7600) (Maize ear and stalk rot fungus).